Here is a 561-residue protein sequence, read N- to C-terminus: DNA ligase B (561 aa).

Lys125 acts as the N6-AMP-lysine intermediate in catalysis.

Belongs to the NAD-dependent DNA ligase family. LigB subfamily.

The enzyme catalyses NAD(+) + (deoxyribonucleotide)n-3'-hydroxyl + 5'-phospho-(deoxyribonucleotide)m = (deoxyribonucleotide)n+m + AMP + beta-nicotinamide D-nucleotide.. Catalyzes the formation of phosphodiester linkages between 5'-phosphoryl and 3'-hydroxyl groups in double-stranded DNA using NAD as a coenzyme and as the energy source for the reaction. This chain is DNA ligase B, found in Salmonella paratyphi A (strain AKU_12601).